Here is a 447-residue protein sequence, read N- to C-terminus: Probable glycine dehydrogenase (decarboxylating) subunit 1 (447 aa).

Belongs to the GcvP family. N-terminal subunit subfamily. As to quaternary structure, the glycine cleavage system is composed of four proteins: P, T, L and H. In this organism, the P 'protein' is a heterodimer of two subunits.

It catalyses the reaction N(6)-[(R)-lipoyl]-L-lysyl-[glycine-cleavage complex H protein] + glycine + H(+) = N(6)-[(R)-S(8)-aminomethyldihydrolipoyl]-L-lysyl-[glycine-cleavage complex H protein] + CO2. Its function is as follows. The glycine cleavage system catalyzes the degradation of glycine. The P protein binds the alpha-amino group of glycine through its pyridoxal phosphate cofactor; CO(2) is released and the remaining methylamine moiety is then transferred to the lipoamide cofactor of the H protein. The chain is Probable glycine dehydrogenase (decarboxylating) subunit 1 from Metallosphaera sedula (strain ATCC 51363 / DSM 5348 / JCM 9185 / NBRC 15509 / TH2).